The following is a 679-amino-acid chain: HEAT repeat-containing protein 3 (679 aa).

Residues 1–11 (MGKSRTKRFKR) show a composition bias toward basic residues. Positions 1-40 (MGKSRTKRFKRPQFSPIESCQAEAAAASNGTGDEEDDGPA) are disordered. S15 carries the post-translational modification Phosphoserine. HEAT repeat units follow at residues 38–69 (GPAAELLEKLQHPSAEVRECACAGLARLVQQR) and 74–110 (DLARRDAVRRLGPLLLDSSLAVRETAAGALRNLSACG). Position 144 is a phosphoserine (S144). Position 339 is a phosphothreonine (T339).

It belongs to the nuclear import and ribosome assembly adapter family. In terms of assembly, component of a hexameric 5S RNP precursor complex, composed of 5S RNA, RRS1, RPF2/BXDC1, RPL5, RPL11 and HEATR3; this complex acts as a precursor for ribosome assembly.

Plays a role in ribosome biogenesis and in nuclear import of the 60S ribosomal protein L5/large ribosomal subunit protein uL18 (RPL5). Required for proper erythrocyte maturation. This Mus musculus (Mouse) protein is HEAT repeat-containing protein 3 (Heatr3).